A 187-amino-acid polypeptide reads, in one-letter code: Elongation factor P 1 (187 aa).

Belongs to the elongation factor P family.

Its subcellular location is the cytoplasm. It functions in the pathway protein biosynthesis; polypeptide chain elongation. Its function is as follows. Involved in peptide bond synthesis. Stimulates efficient translation and peptide-bond synthesis on native or reconstituted 70S ribosomes in vitro. Probably functions indirectly by altering the affinity of the ribosome for aminoacyl-tRNA, thus increasing their reactivity as acceptors for peptidyl transferase. This is Elongation factor P 1 from Geobacter sulfurreducens (strain ATCC 51573 / DSM 12127 / PCA).